An 833-amino-acid chain; its full sequence is Urease (833 aa).

A Urease domain is found at 395–833 (GALDVHVHYI…LPLTRRYFVY (439 aa)). Residues H400 and H402 each contribute to the Ni(2+) site. Residues H402 and A433 each contribute to the urea site. K483 serves as a coordination point for Ni(2+). The residue at position 483 (K483) is an N6-carboxylysine. Residues H485 and H512 each coordinate urea. Residues H512 and H538 each contribute to the Ni(2+) site. H586 functions as the Proton donor in the catalytic mechanism. D626 contributes to the Ni(2+) binding site. A629 provides a ligand contact to urea.

This sequence in the C-terminal section; belongs to the metallo-dependent hydrolases superfamily. Urease alpha subunit family. As to quaternary structure, homohexamer. Ni(2+) serves as cofactor. Post-translationally, carboxylation allows a single lysine to coordinate two nickel ions.

The catalysed reaction is urea + 2 H2O + H(+) = hydrogencarbonate + 2 NH4(+). It functions in the pathway nitrogen metabolism; urea degradation; CO(2) and NH(3) from urea (urease route): step 1/1. With respect to regulation, the urease accessory proteins URE4, URE6 and URE7 are required for urease activity, URE7 supplying nickel for the functional urease. In terms of biological role, plays a nutritional role via nitrogen acquisition in the environment. Contributes to the central nervous system invasion by enhancing yeast sequestration within microcapillary beds (such as within the brain) during hematogenous spread, thereby facilitating blood-to-brain invasion by C.neoformans. Affects fitness within the mammalian phagosome, promoting non-lytic exocytosis while delaying intracellular replication and thus reducing phagolysosomal membrane damage, events that could facilitate cryptococcal dissemination when transported inside macrophages. Urease activity is also associated with the regulation of key intracellular metabolic pathways, including melanin biosynthesis, polyamine biosynthesis, as well as intracellular levels of proline and reactive oxygen species. This Cryptococcus neoformans var. grubii serotype A (strain H99 / ATCC 208821 / CBS 10515 / FGSC 9487) (Filobasidiella neoformans var. grubii) protein is Urease.